The chain runs to 175 residues: Adenine phosphoribosyltransferase (175 aa).

The protein belongs to the purine/pyrimidine phosphoribosyltransferase family. Homodimer.

The protein localises to the cytoplasm. It catalyses the reaction AMP + diphosphate = 5-phospho-alpha-D-ribose 1-diphosphate + adenine. It functions in the pathway purine metabolism; AMP biosynthesis via salvage pathway; AMP from adenine: step 1/1. Functionally, catalyzes a salvage reaction resulting in the formation of AMP, that is energically less costly than de novo synthesis. In Nitrosospira multiformis (strain ATCC 25196 / NCIMB 11849 / C 71), this protein is Adenine phosphoribosyltransferase.